Consider the following 315-residue polypeptide: Methionyl-tRNA formyltransferase (315 aa).

113–116 (SLLP) is a binding site for (6S)-5,6,7,8-tetrahydrofolate.

It belongs to the Fmt family.

The enzyme catalyses L-methionyl-tRNA(fMet) + (6R)-10-formyltetrahydrofolate = N-formyl-L-methionyl-tRNA(fMet) + (6S)-5,6,7,8-tetrahydrofolate + H(+). In terms of biological role, attaches a formyl group to the free amino group of methionyl-tRNA(fMet). The formyl group appears to play a dual role in the initiator identity of N-formylmethionyl-tRNA by promoting its recognition by IF2 and preventing the misappropriation of this tRNA by the elongation apparatus. In Klebsiella pneumoniae (strain 342), this protein is Methionyl-tRNA formyltransferase.